A 582-amino-acid polypeptide reads, in one-letter code: TBCC domain-containing protein 1 (582 aa).

A compositionally biased stretch (low complexity) spans 140-153 (EWPSPRSRSPSSSS). Residues 140–159 (EWPSPRSRSPSSSSSERDAK) form a disordered region. The C-CAP/cofactor C-like domain maps to 305–451 (PPGSRLVLMS…LWNQPLLFGV (147 aa)). Low complexity predominate over residues 547 to 558 (SLLPPTITPSSS). A disordered region spans residues 547 to 582 (SLLPPTITPSSSAEHWSSNQNTLKEQTHEQPTGTVC). Residues 559 to 582 (AEHWSSNQNTLKEQTHEQPTGTVC) are compositionally biased toward polar residues.

The protein belongs to the TBCC family.

The protein localises to the cytoplasm. It localises to the cytoskeleton. Its subcellular location is the microtubule organizing center. It is found in the centrosome. The protein resides in the spindle pole. Functionally, may play a role in the regulation of centrosome and Golgi apparatus positioning. The chain is TBCC domain-containing protein 1 (tbccd1) from Danio rerio (Zebrafish).